A 451-amino-acid polypeptide reads, in one-letter code: Uronate isomerase (451 aa).

Belongs to the metallo-dependent hydrolases superfamily. Uronate isomerase family.

The catalysed reaction is D-glucuronate = D-fructuronate. It carries out the reaction aldehydo-D-galacturonate = keto-D-tagaturonate. The protein operates within carbohydrate metabolism; pentose and glucuronate interconversion. The chain is Uronate isomerase from Thermotoga sp. (strain RQ2).